Reading from the N-terminus, the 201-residue chain is Small ribosomal subunit protein uS4 (201 aa).

Residues 91-154 (SRLDNVIYRA…QKMEWFEEAQ (64 aa)) enclose the S4 RNA-binding domain.

It belongs to the universal ribosomal protein uS4 family. As to quaternary structure, part of the 30S ribosomal subunit. Contacts protein S5. The interaction surface between S4 and S5 is involved in control of translational fidelity.

Functionally, one of the primary rRNA binding proteins, it binds directly to 16S rRNA where it nucleates assembly of the body of the 30S subunit. Its function is as follows. With S5 and S12 plays an important role in translational accuracy. In Corynebacterium aurimucosum (strain ATCC 700975 / DSM 44827 / CIP 107346 / CN-1) (Corynebacterium nigricans), this protein is Small ribosomal subunit protein uS4.